Consider the following 192-residue polypeptide: Casparian strip membrane protein 1 (192 aa).

The Cytoplasmic portion of the chain corresponds to 1 to 26 (MTKSVRLEEGDASKVLVPVGSNKGVS). The chain crosses the membrane as a helical span at residues 27 to 47 (VMDLVLRLVGIAGTLGAAIAM). At 48–75 (GTNEQTLPFFTRFVVFNAEYDDFRSFRL) the chain is on the extracellular side. A helical membrane pass occupies residues 76–96 (FVIVNAIVCAYFVLTLPLSIV). Residues 97–107 (HIMRSAARGSR) lie on the Cytoplasmic side of the membrane. A helical transmembrane segment spans residues 108 to 128 (ILLIIMDTVMLALLTAGASAA). The Extracellular portion of the chain corresponds to 129 to 161 (ASIVYLAHNGNTSTNWLPVCQQYGDFCQGASGS). Residue asparagine 139 is glycosylated (N-linked (GlcNAc...) asparagine). The chain crosses the membrane as a helical span at residues 162–182 (LIGSFGAVVVFILIILLGAIA). Topologically, residues 183–192 (LSRHAKRVVL) are cytoplasmic.

It belongs to the Casparian strip membrane proteins (CASP) family. Homodimer and heterodimers.

The protein resides in the cell membrane. Regulates membrane-cell wall junctions and localized cell wall deposition. Required for establishment of the Casparian strip membrane domain (CSD) and the subsequent formation of Casparian strips, a cell wall modification of the root endodermis that determines an apoplastic barrier between the intraorganismal apoplasm and the extraorganismal apoplasm and prevents lateral diffusion. In Lactuca saligna (Willowleaf lettuce), this protein is Casparian strip membrane protein 1.